Consider the following 380-residue polypeptide: MTNIRKTHPLMKIINHSFIDLPTPSNISSWWNFGSLLGICLVLQILTGLFLAMHYTSDTTTAFSSVTHICRDVNYGWFIRYLHANGASMFFICLYIHVGRGIYYGSFTSMETWNVGIILLFTVMATAFMGYVLPWGQMSFWGATVITNLLSAIPYIGTTLVEWIWGGFSVDKPTLTRFFAFHFILPFIIVALVMVHLLFLHETGSNNPTGLNSNADKIPFHPYYTTKDILGVLLLILFLISLVLFAPDLLGDPDNYTPANPLITPPHIKPEWYFLFAYAILRSIPNKLGGVLALITSILTLTLLPYLYTSKLRSLMFRPLTQLCYWMLVSDIMILTWIGAQPVEYPFITIGQVASILYFTIIIILMPMSTMLEDKMLNWN.

A run of 4 helical transmembrane segments spans residues 33–53, 77–98, 113–133, and 178–198; these read FGSLLGICLVLQILTGLFLAM, WFIRYLHANGASMFFICLYIHV, WNVGIILLFTVMATAFMGYVL, and FFAFHFILPFIIVALVMVHLL. Residues histidine 83 and histidine 97 each coordinate heme b. The heme b site is built by histidine 182 and histidine 196. Position 201 (histidine 201) interacts with a ubiquinone. 4 helical membrane passes run 226–246, 288–308, 320–340, and 347–367; these read TKDILGVLLLILFLISLVLFA, LGGVLALITSILTLTLLPYLY, LTQLCYWMLVSDIMILTWIGA, and FITIGQVASILYFTIIIILMP.

It belongs to the cytochrome b family. As to quaternary structure, the cytochrome bc1 complex contains 11 subunits: 3 respiratory subunits (MT-CYB, CYC1 and UQCRFS1), 2 core proteins (UQCRC1 and UQCRC2) and 6 low-molecular weight proteins (UQCRH/QCR6, UQCRB/QCR7, UQCRQ/QCR8, UQCR10/QCR9, UQCR11/QCR10 and a cleavage product of UQCRFS1). This cytochrome bc1 complex then forms a dimer. The cofactor is heme b.

It localises to the mitochondrion inner membrane. In terms of biological role, component of the ubiquinol-cytochrome c reductase complex (complex III or cytochrome b-c1 complex) that is part of the mitochondrial respiratory chain. The b-c1 complex mediates electron transfer from ubiquinol to cytochrome c. Contributes to the generation of a proton gradient across the mitochondrial membrane that is then used for ATP synthesis. The chain is Cytochrome b (MT-CYB) from Cricetomys emini (Emin's giant pouched rat).